The primary structure comprises 275 residues: Adenosylcobinamide-GDP ribazoletransferase (275 aa).

The next 6 membrane-spanning stretches (helical) occupy residues 52 to 72 (VVGV…GVLG), 73 to 93 (VTPL…NRMM), 126 to 146 (MGFS…AALV), 181 to 201 (FGAM…LVAL), 208 to 228 (VAVW…GIIA), and 251 to 271 (IGAG…VAVA).

It belongs to the CobS family. It depends on Mg(2+) as a cofactor.

It is found in the cell membrane. It carries out the reaction alpha-ribazole + adenosylcob(III)inamide-GDP = adenosylcob(III)alamin + GMP + H(+). The catalysed reaction is alpha-ribazole 5'-phosphate + adenosylcob(III)inamide-GDP = adenosylcob(III)alamin 5'-phosphate + GMP + H(+). It functions in the pathway cofactor biosynthesis; adenosylcobalamin biosynthesis; adenosylcobalamin from cob(II)yrinate a,c-diamide: step 7/7. Its function is as follows. Joins adenosylcobinamide-GDP and alpha-ribazole to generate adenosylcobalamin (Ado-cobalamin). Also synthesizes adenosylcobalamin 5'-phosphate from adenosylcobinamide-GDP and alpha-ribazole 5'-phosphate. The sequence is that of Adenosylcobinamide-GDP ribazoletransferase from Corynebacterium efficiens (strain DSM 44549 / YS-314 / AJ 12310 / JCM 11189 / NBRC 100395).